We begin with the raw amino-acid sequence, 156 residues long: Sperm acrosome-associated protein 5 (156 aa).

Positions 1-18 (MQVSGTIVVILMAANVEA) are cleaved as a signal peptide. One can recognise a C-type lysozyme domain in the interval 19-147 (KIYERCDLAK…SEWLRGCHMN (129 aa)). Cystine bridges form between cysteine 24/cysteine 144, cysteine 48/cysteine 132, cysteine 82/cysteine 97, and cysteine 93/cysteine 111. Glutamate 53 is a catalytic residue.

This sequence belongs to the glycosyl hydrolase 22 family.

The protein resides in the secreted. It carries out the reaction Hydrolysis of (1-&gt;4)-beta-linkages between N-acetylmuramic acid and N-acetyl-D-glucosamine residues in a peptidoglycan and between N-acetyl-D-glucosamine residues in chitodextrins.. In Bos taurus (Bovine), this protein is Sperm acrosome-associated protein 5 (SPACA5).